Reading from the N-terminus, the 267-residue chain is O-methyltransferase (267 aa).

Residues Q100 and H145 each contribute to the S-adenosyl-L-methionine site.

Belongs to the methyltransferase superfamily.

It participates in antifungal biosynthesis. Functionally, O-methyltransferase; part of the gene cluster that mediates the biosynthesis of the tetrahydropyranyl antifungal agent lanomycin that acts as an inhibitor of CYP51 and blocks the ergosterol biosynthesis. The biosynthesis probably begins with the formation of an hexaketide, followed by methionine mediated alkylation of C-2 and C-6, and methylation of the reduced C-3 oxygen, pyran forming reductive ring closure, oxygenation of C-4, beta-keto reduction, enoyl reduction and dehydration of the remaining oxygens, and finally, acylation with glycine to complete the biosynthesis. The chain is O-methyltransferase from Pyrenophora dematioidea (Helminthosporium dematioideum).